The sequence spans 169 residues: MFDYQVSKHPHFDEACRAFALRHNLVQLAERAGMNVQILRNKLNPSQPHLLTAPEIWLLTDLTEDSTLVDGFLAQIHCLPCVPINEVAKEKLPHYVMSATAEIGRVAAGAVSGDVKTSAGRRDAISSINSVTRLMALAAVSLQARLQANPAMASAVDTVTGLGASFGLL.

The chain is Protein ORFb in retron Ec67 from Escherichia coli.